A 185-amino-acid polypeptide reads, in one-letter code: MISTNDFRTGLTIELEGEVYQVIEFQHVKPGKGAAFVRSKLRNMRTGAVIEKTFNAGEKIPRARIERREMQYLYSDGKEYNFMDMETYDQVTMSAAQLGDAVKYLKENMNIQVLLFQGKSIGVELPNFVELEVIDTTPGIKGDTASGGSKPATLETGAVVQVPFFVNVGDKLQIDTRTGNYIKRV.

It belongs to the elongation factor P family.

The protein localises to the cytoplasm. The protein operates within protein biosynthesis; polypeptide chain elongation. Its function is as follows. Involved in peptide bond synthesis. Stimulates efficient translation and peptide-bond synthesis on native or reconstituted 70S ribosomes in vitro. Probably functions indirectly by altering the affinity of the ribosome for aminoacyl-tRNA, thus increasing their reactivity as acceptors for peptidyl transferase. This Pelotomaculum thermopropionicum (strain DSM 13744 / JCM 10971 / SI) protein is Elongation factor P.